A 793-amino-acid polypeptide reads, in one-letter code: Calcium permeable stress-gated cation channel 1 (793 aa).

Over 1 to 21 (MAFNGYGIFDSDPRKNPSSDL) the chain is Lumenal. The helical transmembrane segment at 22-42 (RTQFWLAFLLGASACVFFCFF) threads the bilayer. Topologically, residues 43–95 (RKRWKVLYAPRTTIEGLNLPTLSSSYYKWLMDLVNIPDDVVQNCAGLDGYVFL) are cytoplasmic. The helical transmembrane segment at 96 to 116 (LFFKMGIKFLSFASLLGVLII) threads the bilayer. Residues 117 to 192 (MPVNKHFRGD…IPGLPQPGDG (76 aa)) lie on the Lumenal side of the membrane. The helical transmembrane segment at 193–213 (FLYLYVLFTYFISIFLLYVLF) threads the bilayer. Residues 214–444 (SSTKSIADIR…HKFFQGWFIT (231 aa)) are Cytoplasmic-facing. The helical transmembrane segment at 445–465 (LVTFMIILLWTVPVGAIAVFI) threads the bilayer. Residues 466 to 493 (NLDTIRRLWPELGRMIEDLPFLNSLLRT) are Lumenal-facing. Residues 494–514 (FLPTLVYSLFISISPFLFRWL) form a helical membrane-spanning segment. Over 515–534 (SSMQGLSSRAEEEIYAVGKN) the chain is Cytoplasmic. The chain crosses the membrane as a helical span at residues 535–555 (YAYLFVNFFLVYVIAGSTSIW). Residues 556-577 (ELAKDTTSFAHFLANRLPHQAQ) lie on the Lumenal side of the membrane. A helical membrane pass occupies residues 578 to 598 (FFIDLIVLQGIGMFPLKLIQL). The Cytoplasmic segment spans residues 599 to 646 (GKLSSYFVRRSFVPYSIASKKFETPDSFSVGIFLPQPMFIMLICLCYS). The helical transmembrane segment at 647–667 (IISPLILVFGLIYFIIGFLVY) threads the bilayer. Residues 668-687 (KYELIYQMEHPQHSTGELWS) are Lumenal-facing. A helical transmembrane segment spans residues 688-708 (TIFLRMIFGCVIMQLTMMGLM). Residues 709-713 (SLRKA) are Cytoplasmic-facing. The helical transmembrane segment at 714-734 (YWLSTVIFPLLCFTVISAYNF) threads the bilayer. At 735–793 (STMIRSSMQFVSLYYIRTHQSNTLSSESESRNSESSGSYVHPGFDLSNEELPLIDLNTA) the chain is on the lumenal side. Residues 759-778 (SSESESRNSESSGSYVHPGF) are disordered.

The protein belongs to the CSC1 (TC 1.A.17) family.

The protein resides in the vacuole membrane. In terms of biological role, acts as an osmosensitive calcium-permeable cation channel. The protein is Calcium permeable stress-gated cation channel 1 of Schizosaccharomyces pombe (strain 972 / ATCC 24843) (Fission yeast).